Here is a 337-residue protein sequence, read N- to C-terminus: Putative 2-aminoethylphosphonate-binding periplasmic protein (337 aa).

The signal sequence occupies residues 1–21 (MKLSRLALLSVFALASAPSWA).

Belongs to the bacterial solute-binding protein 1 family.

It localises to the periplasm. In terms of biological role, probably part of the PhnSTUV complex (TC 3.A.1.11.5) involved in 2-aminoethylphosphonate import. This Salmonella typhi protein is Putative 2-aminoethylphosphonate-binding periplasmic protein (phnS).